Consider the following 141-residue polypeptide: Hemoglobin subunit alpha (141 aa).

The Globin domain maps to 1–141 (VLSDKDKTNV…VSTVLTSKYR (141 aa)). At serine 3 the chain carries Phosphoserine. Lysine 7 is subject to N6-succinyllysine. At threonine 8 the chain carries Phosphothreonine. Lysine 11 is subject to N6-succinyllysine. Lysine 16 carries the post-translational modification N6-acetyllysine; alternate. N6-succinyllysine; alternate is present on lysine 16. Tyrosine 24 is subject to Phosphotyrosine. Position 35 is a phosphoserine (serine 35). Lysine 40 carries the N6-succinyllysine modification. Serine 49 is modified (phosphoserine). Histidine 58 is a binding site for O2. Residue histidine 87 participates in heme b binding. Serine 102 is modified (phosphoserine). Position 108 is a phosphothreonine (threonine 108). Serine 124 carries the phosphoserine modification. Phosphothreonine is present on residues threonine 134 and threonine 137. Position 138 is a phosphoserine (serine 138).

It belongs to the globin family. In terms of assembly, heterotetramer of two alpha chains and two beta chains. As to expression, red blood cells.

Involved in oxygen transport from the lung to the various peripheral tissues. Functionally, hemopressin acts as an antagonist peptide of the cannabinoid receptor CNR1. Hemopressin-binding efficiently blocks cannabinoid receptor CNR1 and subsequent signaling. The chain is Hemoglobin subunit alpha (HBA) from Elephas maximus (Indian elephant).